We begin with the raw amino-acid sequence, 183 residues long: Endoribonuclease AbiQ (183 aa).

This sequence belongs to the ToxN/AbiQ toxin family. Forms a triangular heterohexamer with a single 35-nt-long repeat of RNA antitoxin AntiQ.

Its subcellular location is the cytoplasm. Toxic component of a type III toxin-antitoxin (TA) system. An endoribonuclease that is probably sequence-specific. It is neutralized by its cognate antitoxin RNA AntiQ, which has 2.8 35 nucleotide-long repeats. Cannot be cloned in L.lactis subsp. cremoris strain NZ9000 in the absence of the antitoxin gene; expression in strain NZ9000 even in the presence of antiQ inhibits growth in a bacteriostatic fashion. Confers resistance to 936 and c2 phages but not P335 phages in L.lactis, causes an abortive infection (Abi phenotype). Viral DNA is replicated but not cleaved from its concatemeric form, while the viral major structural protein is produced normally in the presence of this protein. Operon expression in E.coli confers resistance to 3 phages of the Myoviridae family (T4, RB69 and phage 2) and 1 of the Siphoviridae family (T5), but not other tested phages (T1, T3, lambda vir, HK97, Mu and pilH alpha). The presence of this operon in L.lactis subsp. lactis strain IL1403 during phage P008 infection alters the viral transcription profiles. This is Endoribonuclease AbiQ from Lactococcus lactis subsp. lactis (Streptococcus lactis).